The sequence spans 82 residues: Zinc finger CCCH domain-containing protein 13 (82 aa).

2 consecutive C3H1-type zinc fingers follow at residues Arg9–Asn37 and Arg55–Thr82.

This is Zinc finger CCCH domain-containing protein 13 from Arabidopsis thaliana (Mouse-ear cress).